Reading from the N-terminus, the 187-residue chain is Elongation factor P (187 aa).

It belongs to the elongation factor P family.

Its subcellular location is the cytoplasm. It functions in the pathway protein biosynthesis; polypeptide chain elongation. In terms of biological role, involved in peptide bond synthesis. Stimulates efficient translation and peptide-bond synthesis on native or reconstituted 70S ribosomes in vitro. Probably functions indirectly by altering the affinity of the ribosome for aminoacyl-tRNA, thus increasing their reactivity as acceptors for peptidyl transferase. This Arthrobacter sp. (strain FB24) protein is Elongation factor P.